Consider the following 704-residue polypeptide: Glycine--tRNA ligase beta subunit (704 aa).

It belongs to the class-II aminoacyl-tRNA synthetase family. As to quaternary structure, tetramer of two alpha and two beta subunits.

The protein localises to the cytoplasm. The enzyme catalyses tRNA(Gly) + glycine + ATP = glycyl-tRNA(Gly) + AMP + diphosphate. This chain is Glycine--tRNA ligase beta subunit, found in Delftia acidovorans (strain DSM 14801 / SPH-1).